The primary structure comprises 122 residues: Small ribosomal subunit protein uS13 (122 aa).

A disordered region spans residues 99–122; that stretch reads RGQRTHTNARTRKGPAKAIAGKKK.

It belongs to the universal ribosomal protein uS13 family. As to quaternary structure, part of the 30S ribosomal subunit. Forms a loose heterodimer with protein S19. Forms two bridges to the 50S subunit in the 70S ribosome.

In terms of biological role, located at the top of the head of the 30S subunit, it contacts several helices of the 16S rRNA. In the 70S ribosome it contacts the 23S rRNA (bridge B1a) and protein L5 of the 50S subunit (bridge B1b), connecting the 2 subunits; these bridges are implicated in subunit movement. Contacts the tRNAs in the A and P-sites. In Sinorhizobium medicae (strain WSM419) (Ensifer medicae), this protein is Small ribosomal subunit protein uS13.